Consider the following 307-residue polypeptide: Protoheme IX farnesyltransferase (307 aa).

A run of 8 helical transmembrane segments spans residues 32-52, 65-85, 108-128, 131-151, 158-178, 186-206, 251-271, and 287-307; these read MGIV…ALHF, FFTI…NNYI, PGFA…FLLL, PMAV…YSLW, LNTV…WAAI, IAWM…LALA, LGIT…VLGF, and FVYS…VTFF.

Belongs to the UbiA prenyltransferase family. Protoheme IX farnesyltransferase subfamily. As to quaternary structure, interacts with CtaA.

Its subcellular location is the cell membrane. It catalyses the reaction heme b + (2E,6E)-farnesyl diphosphate + H2O = Fe(II)-heme o + diphosphate. Its pathway is porphyrin-containing compound metabolism; heme O biosynthesis; heme O from protoheme: step 1/1. In terms of biological role, converts heme B (protoheme IX) to heme O by substitution of the vinyl group on carbon 2 of heme B porphyrin ring with a hydroxyethyl farnesyl side group. The sequence is that of Protoheme IX farnesyltransferase from Bacillus cereus (strain ATCC 10987 / NRS 248).